Here is a 424-residue protein sequence, read N- to C-terminus: Enolase (424 aa).

Glutamine 163 serves as a coordination point for (2R)-2-phosphoglycerate. Glutamate 204 (proton donor) is an active-site residue. Mg(2+) is bound by residues aspartate 241, glutamate 284, and aspartate 311. (2R)-2-phosphoglycerate contacts are provided by lysine 336, arginine 365, serine 366, and lysine 387. Catalysis depends on lysine 336, which acts as the Proton acceptor.

Belongs to the enolase family. Mg(2+) serves as cofactor.

The protein localises to the cytoplasm. Its subcellular location is the secreted. It localises to the cell surface. The catalysed reaction is (2R)-2-phosphoglycerate = phosphoenolpyruvate + H2O. It functions in the pathway carbohydrate degradation; glycolysis; pyruvate from D-glyceraldehyde 3-phosphate: step 4/5. Functionally, catalyzes the reversible conversion of 2-phosphoglycerate (2-PG) into phosphoenolpyruvate (PEP). It is essential for the degradation of carbohydrates via glycolysis. This is Enolase from Dictyoglomus turgidum (strain DSM 6724 / Z-1310).